The primary structure comprises 266 residues: Large ribosomal subunit protein uL4 (266 aa).

It belongs to the universal ribosomal protein uL4 family. In terms of assembly, part of the 50S ribosomal subunit.

In terms of biological role, one of the primary rRNA binding proteins, this protein initially binds near the 5'-end of the 23S rRNA. It is important during the early stages of 50S assembly. It makes multiple contacts with different domains of the 23S rRNA in the assembled 50S subunit and ribosome. Its function is as follows. Forms part of the polypeptide exit tunnel. The chain is Large ribosomal subunit protein uL4 from Sulfolobus acidocaldarius (strain ATCC 33909 / DSM 639 / JCM 8929 / NBRC 15157 / NCIMB 11770).